We begin with the raw amino-acid sequence, 333 residues long: Minor fimbrium tip subunit MfA4 (333 aa).

The first 18 residues, 1–18 (MKKYLLYASLLTSVLLFS), serve as a signal peptide directing secretion. The N-palmitoyl cysteine moiety is linked to residue Cys-19. The S-diacylglycerol cysteine moiety is linked to residue Cys-19. A propeptide spanning residues 19 to 53 (CSKNNPSEPVEDRSIEISIRVDDFTKTGETVRYER) is cleaved from the precursor.

Belongs to the bacteroidetes fimbrillin superfamily. FimA/Mfa1 family. Component of the fimbrium tip. Minor fimbriae are composed of a structural subunit, most often Mfa1, and the accessory subunits Mfa3, Mfa4 and Mfa5. Mfa4 is required for Mfa3 and Mfa5 insertion into the fimbrium. Fimbrium assembly occurs by linear, head-to-tail oligomerization of fimbrial subunits. This is mediated via insertion of a C-terminal beta-strand from one subunit into a groove in the N-terminal domain of the following subunit.

Its subcellular location is the fimbrium. The protein localises to the cell outer membrane. Functionally, tip subunit of the minor fimbriae. These filamentous pili are attached to the cell surface; they mediate biofilm formation, adhesion onto host cells and onto other bacteria that are part of the oral microbiome. They play an important role in invasion of periodontal tissues and are recognized as major virulence factors. The sequence is that of Minor fimbrium tip subunit MfA4 from Porphyromonas gingivalis (strain ATCC 33277 / DSM 20709 / CIP 103683 / JCM 12257 / NCTC 11834 / 2561).